Reading from the N-terminus, the 319-residue chain is Ankyrin repeat domain-containing protein 1 (319 aa).

Residues 61–89 (KSEKQREAELKKKKLEQRSKLENLEDLEI) are a coiled coil. 5 ANK repeats span residues 152–181 (YKRTALHRACLEGHLAIVEKLMEAGAQIEF), 185–214 (LESTAIHWASRGGNLDVLKLLLNKGAKISA), 218–247 (LLSTALHVAVRTGHYECAEHLIACEADLNA), 251–280 (EGDTPLHDAVRLNRYKMIRLLIMYGADLNI), and 284–315 (AGKTPMDLVLHWQNGTKAIFDSLRENSYKTSR).

As to quaternary structure, interacts with YBX1. Interacts with TTN/titin. Mainly expressed in activated vascular endothelial cells. To a lower extent, also expressed in hepatoma cells.

Its subcellular location is the nucleus. Its function is as follows. May play an important role in endothelial cell activation. May act as a nuclear transcription factor that negatively regulates the expression of cardiac genes. Induction seems to be correlated with apoptotic cell death in hepatoma cells. This Homo sapiens (Human) protein is Ankyrin repeat domain-containing protein 1 (ANKRD1).